The following is a 510-amino-acid chain: Maturase K (510 aa).

The protein belongs to the intron maturase 2 family. MatK subfamily.

It localises to the plastid. Its subcellular location is the chloroplast. Functionally, usually encoded in the trnK tRNA gene intron. Probably assists in splicing its own and other chloroplast group II introns. The sequence is that of Maturase K from Spirodela intermedia (Intermediate duckweed).